Here is a 299-residue protein sequence, read N- to C-terminus: UDP-3-O-acyl-N-acetylglucosamine deacetylase (299 aa).

Zn(2+) is bound by residues His-75, His-232, and Asp-236. Residue His-259 is the Proton donor of the active site.

Belongs to the LpxC family. Zn(2+) is required as a cofactor.

It catalyses the reaction a UDP-3-O-[(3R)-3-hydroxyacyl]-N-acetyl-alpha-D-glucosamine + H2O = a UDP-3-O-[(3R)-3-hydroxyacyl]-alpha-D-glucosamine + acetate. The protein operates within glycolipid biosynthesis; lipid IV(A) biosynthesis; lipid IV(A) from (3R)-3-hydroxytetradecanoyl-[acyl-carrier-protein] and UDP-N-acetyl-alpha-D-glucosamine: step 2/6. Functionally, catalyzes the hydrolysis of UDP-3-O-myristoyl-N-acetylglucosamine to form UDP-3-O-myristoylglucosamine and acetate, the committed step in lipid A biosynthesis. This Helicobacter hepaticus (strain ATCC 51449 / 3B1) protein is UDP-3-O-acyl-N-acetylglucosamine deacetylase.